The following is a 323-amino-acid chain: Sphingomyelinase D (323 aa).

A signal peptide spans 1-20 (MISLLRLCSFLAAGSILVQG). His59 is a catalytic residue. Residues Glu79, Asp81, and Asp127 each contribute to the Mg(2+) site. The short motif at 308–315 (ATNDDNPW) is the SMD-tail element.

Belongs to the sphingomyelinase D/phospholipase D family. Mg(2+) serves as cofactor.

It localises to the secreted. The enzyme catalyses a sphingomyelin + H2O = an N-acylsphing-4-enine 1-phosphate + choline + H(+). Functionally, catalyzes the hydrolysis of sphingomyelin. Sphingomyelinases D are produced by some spider in their venoms, but also by arthropods such as ticks, or pathogenic bacteria and fungi. They might play a role in pathogenicity through different mechanisms, such as membrane destabilization and host cell penetration, but also pulmonary inflammation and cutaneous lesions. The protein is Sphingomyelinase D of Trichophyton rubrum (strain ATCC MYA-4607 / CBS 118892) (Athlete's foot fungus).